Reading from the N-terminus, the 163-residue chain is Putative defense protein 3 (163 aa).

The N-terminal stretch at 1-18 is a signal peptide; it reads MMFAYIVAVVSALALTSA. In terms of domain architecture, Reelin spans 19-163; that stretch reads YPTGAPSSTC…SAPVTVLSHK (145 aa). C28 and C103 form a disulfide bridge.

It belongs to the insect defense protein family.

It is found in the secreted. Its function is as follows. May have antimicrobial activity. The protein is Putative defense protein 3 of Antheraea mylitta (Tasar silkworm).